Here is a 464-residue protein sequence, read N- to C-terminus: Glutamate decarboxylase beta (464 aa).

Lysine 275 bears the N6-(pyridoxal phosphate)lysine mark.

The protein belongs to the group II decarboxylase family. Pyridoxal 5'-phosphate is required as a cofactor.

It catalyses the reaction L-glutamate + H(+) = 4-aminobutanoate + CO2. In terms of biological role, converts internalized glutamate to GABA and increases the internal pH. Involved in glutamate-dependent acid resistance in gastric fluid. In Listeria monocytogenes serovar 1/2a (strain ATCC BAA-679 / EGD-e), this protein is Glutamate decarboxylase beta (gadB).